The sequence spans 421 residues: DUF724 domain-containing protein 8 (421 aa).

Composition is skewed to polar residues over residues Thr-149–Glu-165 and Pro-199–Asn-213. Residues Thr-149–Leu-229 are disordered. The DUF724 domain occupies Val-246–Pro-420. A coiled-coil region spans residues Glu-361 to Ser-397.

As to expression, expressed in leaves and flowers, and at lower levels in roots, stems and siliques.

It is found in the nucleus. Functionally, may be involved in the polar growth of plant cells via transportation of RNAs. The chain is DUF724 domain-containing protein 8 from Arabidopsis thaliana (Mouse-ear cress).